The sequence spans 476 residues: Major facilitator superfamily domain-containing protein 12 (476 aa).

M1 is subject to N-acetylmethionine. Over 1 to 25 (MSPPSDDAGPGPPRTLSLAARLSFA) the chain is Cytoplasmic. Residues 26–46 (VGHFLNDLCAGMWFTYLLLFL) form a helical membrane-spanning segment. Topologically, residues 47-55 (HSVRGYSSR) are lumenal. Residues 56–76 (GAGLLLLLGQVADGLCTPLVG) traverse the membrane as a helical segment. The Cytoplasmic segment spans residues 77 to 94 (YEADRASCVRCGPRKAWH). Residues 95–115 (LAGTVCVLLSFPFIFSPCLGC) traverse the membrane as a helical segment. Residues 116–121 (GEATPE) lie on the Lumenal side of the membrane. A helical transmembrane segment spans residues 122–142 (WAALLYYGPFIVVFQFGWAAT). Topologically, residues 143 to 167 (QIAHLSLIPELVTSDHEKVELTALR) are cytoplasmic. A helical transmembrane segment spans residues 168-188 (YAFTVVANITVYGAAWLLLHL). At 189 to 213 (QGSAHGEQDISVGDQLGVQDVPVFR) the chain is on the lumenal side. A helical transmembrane segment spans residues 214–234 (NLALLVVGVGAIFSLLFHLGT). Residues 235 to 284 (KEGHRSQHWGNEPNEHTPLVAPAAQPLLLWKHWLREPAFYQVGMLYMTTR) are Cytoplasmic-facing. T251 is subject to Phosphothreonine. Residues 285–305 (LIVNLSQTYIAMYLTYSLSLP) form a helical membrane-spanning segment. Residue K306 is a topological domain, lumenal. The chain crosses the membrane as a helical span at residues 307–327 (KFIATIPLVMYLSGFFSSFLM). Residues 328-343 (KPVNRRIGRNMTYFTG) are Cytoplasmic-facing. 2 helical membrane passes run 344–364 (LLVILAFAAWVALADNLGVAV) and 365–385 (YGAAVLLGAGCATILVTSLAM). Topologically, residues 386–398 (TADLIGPHTHSGA) are cytoplasmic. Residues 399 to 419 (FVYGAMSFSDKVANGLAVMAV) traverse the membrane as a helical segment. Over 420-444 (QSLHPCPSELCCGACISFYHWVMTA) the chain is Lumenal. Residues 445-465 (VTGGVGVAAALALCSLLIWPI) traverse the membrane as a helical segment. Residues 466–476 (RIRNRDPRDRP) lie on the Cytoplasmic side of the membrane.

This sequence belongs to the major facilitator superfamily. Phosphorylation at Thr-251 by MTOR via mTORC1 pathway promotes cysteine transport in lysosomes, thereby regulating lysosomal cysteine and cystine storage and redox homeostasis.

It is found in the melanosome membrane. It localises to the lysosome membrane. It catalyses the reaction L-cysteine(in) = L-cysteine(out). Functionally, transporter that mediates the import of cysteine into melanosomes, thereby regulating skin/hair pigmentation. In melanosomes, cysteine import is required both for normal levels of cystine, the oxidized dimer of cysteine, and provide cysteine for the production of the cysteinyldopas used in pheomelanin synthesis, thereby regulating skin/hair pigmentation. Also catalyzes import of cysteine into lysosomes in non-pigmented cells, regulating lysosomal cystine and cysteine storage, which is essnetial for redox homeostasis. The sequence is that of Major facilitator superfamily domain-containing protein 12 from Mus musculus (Mouse).